Here is a 549-residue protein sequence, read N- to C-terminus: Glucose-6-phosphate isomerase (549 aa).

N6-acetyllysine is present on residues Lys80, Lys228, and Lys234. The active-site Proton donor is the Glu355. Residues His386 and Lys514 contribute to the active site.

Belongs to the GPI family.

The protein resides in the cytoplasm. It carries out the reaction alpha-D-glucose 6-phosphate = beta-D-fructose 6-phosphate. It participates in carbohydrate biosynthesis; gluconeogenesis. Its pathway is carbohydrate degradation; glycolysis; D-glyceraldehyde 3-phosphate and glycerone phosphate from D-glucose: step 2/4. Functionally, catalyzes the reversible isomerization of glucose-6-phosphate to fructose-6-phosphate. This Escherichia coli (strain SMS-3-5 / SECEC) protein is Glucose-6-phosphate isomerase.